A 505-amino-acid polypeptide reads, in one-letter code: ATP synthase subunit beta (505 aa).

157 to 164 contacts ATP; the sequence is GGAGVGKT.

The protein belongs to the ATPase alpha/beta chains family. F-type ATPases have 2 components, CF(1) - the catalytic core - and CF(0) - the membrane proton channel. CF(1) has five subunits: alpha(3), beta(3), gamma(1), delta(1), epsilon(1). CF(0) has three main subunits: a(1), b(2) and c(9-12). The alpha and beta chains form an alternating ring which encloses part of the gamma chain. CF(1) is attached to CF(0) by a central stalk formed by the gamma and epsilon chains, while a peripheral stalk is formed by the delta and b chains.

It localises to the cell inner membrane. The enzyme catalyses ATP + H2O + 4 H(+)(in) = ADP + phosphate + 5 H(+)(out). In terms of biological role, produces ATP from ADP in the presence of a proton gradient across the membrane. The catalytic sites are hosted primarily by the beta subunits. In Bacteroides thetaiotaomicron (strain ATCC 29148 / DSM 2079 / JCM 5827 / CCUG 10774 / NCTC 10582 / VPI-5482 / E50), this protein is ATP synthase subunit beta.